We begin with the raw amino-acid sequence, 346 residues long: Lysyl aminopeptidase (346 aa).

Zn(2+) is bound by residues H63 and D177. E207 acts as the Proton acceptor in catalysis. The Zn(2+) site is built by E208, D230, and H314.

As to quaternary structure, homotetramer. The cofactor is Zn(2+).

It catalyses the reaction Preferentially, release of N-terminal lysine.. In terms of biological role, hydrolyzes di-, tri- and tetrapeptides with a lysine as the N-terminal amino acid and with Gly, Lys, Ala, Phe or Glu in the second position. This chain is Lysyl aminopeptidase, found in Pyrococcus furiosus (strain ATCC 43587 / DSM 3638 / JCM 8422 / Vc1).